The sequence spans 146 residues: Type II secretion system core protein G (146 aa).

A propeptide spans 1–9 (MKKMRKQTG) (leader sequence). At Phe10 the chain carries N-methylphenylalanine. The helical transmembrane segment at 10 to 30 (FTLLEVMVVVVILGILASFVV) threads the bilayer.

The protein belongs to the GSP G family. As to quaternary structure, type II secretion system is composed of four main components: the outer membrane complex, the inner membrane complex, the cytoplasmic secretion ATPase and the periplasm-spanning pseudopilus. Forms homomultimers. Interacts with EspL. Post-translationally, cleaved by the prepilin peptidase. Methylated by prepilin peptidase at the amino group of the N-terminal phenylalanine once the leader sequence is cleaved.

The protein localises to the cell inner membrane. Core component of the type II secretion system required for the energy-dependent secretion of extracellular factors such as proteases and toxins from the periplasm. Pseudopilin (pilin-like) protein that polymerizes to form the pseudopilus. Further polymerization triggers pseudopilus growth. The polypeptide is Type II secretion system core protein G (epsG) (Vibrio cholerae serotype O1 (strain ATCC 39315 / El Tor Inaba N16961)).